Consider the following 132-residue polypeptide: Small ribosomal subunit protein uS8 (132 aa).

This sequence belongs to the universal ribosomal protein uS8 family. As to quaternary structure, part of the 30S ribosomal subunit. Contacts proteins S5 and S12.

In terms of biological role, one of the primary rRNA binding proteins, it binds directly to 16S rRNA central domain where it helps coordinate assembly of the platform of the 30S subunit. The sequence is that of Small ribosomal subunit protein uS8 from Methylocella silvestris (strain DSM 15510 / CIP 108128 / LMG 27833 / NCIMB 13906 / BL2).